A 360-amino-acid polypeptide reads, in one-letter code: (+)-6a-hydroxymaackiain 3-O-methyltransferase 2 (360 aa).

Residues 202-205 (VAGG), aspartate 226, 226-227 (DQ), 246-247 (DM), and lysine 260 contribute to the S-adenosyl-L-methionine site. The active-site Proton acceptor is the histidine 264.

It belongs to the class I-like SAM-binding methyltransferase superfamily. Cation-independent O-methyltransferase family. COMT subfamily.

It catalyses the reaction (+)-6a-hydroxymaackiain + S-adenosyl-L-methionine = (+)-pisatin + S-adenosyl-L-homocysteine + H(+). Functionally, 3-O-methyltransferase involved in the phytoalexin pisatin biosynthesis. Can use (+)-6a-hydroxymaackiain, (+)-maackiain and with a lower activity (+)-medicarpin and 2,7,4'-trihydroxyisoflavanone as substrates, but not (-)-6a-hydroxymaackiain, daidzein, formononetin or isoliquiritigenin. This chain is (+)-6a-hydroxymaackiain 3-O-methyltransferase 2 (HMM2), found in Pisum sativum (Garden pea).